The following is a 920-amino-acid chain: DNA ligase (920 aa).

Residues 90–94, 139–140, and Glu173 each bind NAD(+); these read DAAYD and SL. Residue Lys175 is the N6-AMP-lysine intermediate of the active site. The NAD(+) site is built by Arg196, Glu235, Lys360, and Lys384. 4 residues coordinate Zn(2+): Cys481, Cys484, Cys500, and Cys506. The interval 659 to 691 is disordered; sequence RAQGEAAIESAETQGDTASETTGAPTGAEAPLG. A compositionally biased stretch (polar residues) spans 669–682; sequence AETQGDTASETTGA. A BRCT domain is found at 839–920; that stretch reads SLPQTLAGKT…FAQLLATGTI (82 aa).

Belongs to the NAD-dependent DNA ligase family. LigA subfamily. The cofactor is Mg(2+). It depends on Mn(2+) as a cofactor.

It catalyses the reaction NAD(+) + (deoxyribonucleotide)n-3'-hydroxyl + 5'-phospho-(deoxyribonucleotide)m = (deoxyribonucleotide)n+m + AMP + beta-nicotinamide D-nucleotide.. In terms of biological role, DNA ligase that catalyzes the formation of phosphodiester linkages between 5'-phosphoryl and 3'-hydroxyl groups in double-stranded DNA using NAD as a coenzyme and as the energy source for the reaction. It is essential for DNA replication and repair of damaged DNA. The chain is DNA ligase from Bifidobacterium longum (strain NCC 2705).